Consider the following 366-residue polypeptide: Holliday junction branch migration complex subunit RuvB (366 aa).

The interval 1 to 50 is disordered; that stretch reads MAIISSKKQPPEPNGEPKQRRESAKAPSTENILKPEAAIDEQEQQEEGIR. The segment at 13-210 is large ATPase domain (RuvB-L); sequence PNGEPKQRRE…FGLIQKLRFY (198 aa). Residues 15 to 24 show a composition bias toward basic and acidic residues; it reads GEPKQRRESA. ATP-binding positions include I49, R50, G91, K94, T95, T96, 157–159, R200, Y210, and R247; that span reads EDY. A Mg(2+)-binding site is contributed by T95. Residues 211–281 are small ATPAse domain (RuvB-S); that stretch reads EVDELTQIVL…IASEALQLFQ (71 aa). Residues 284–366 are head domain (RuvB-H); it reads PCGLDWTDRQ…TPPNEQLSLL (83 aa). The DNA site is built by R339 and R344.

Belongs to the RuvB family. Homohexamer. Forms an RuvA(8)-RuvB(12)-Holliday junction (HJ) complex. HJ DNA is sandwiched between 2 RuvA tetramers; dsDNA enters through RuvA and exits via RuvB. An RuvB hexamer assembles on each DNA strand where it exits the tetramer. Each RuvB hexamer is contacted by two RuvA subunits (via domain III) on 2 adjacent RuvB subunits; this complex drives branch migration. In the full resolvosome a probable DNA-RuvA(4)-RuvB(12)-RuvC(2) complex forms which resolves the HJ.

It localises to the cytoplasm. It catalyses the reaction ATP + H2O = ADP + phosphate + H(+). In terms of biological role, the RuvA-RuvB-RuvC complex processes Holliday junction (HJ) DNA during genetic recombination and DNA repair, while the RuvA-RuvB complex plays an important role in the rescue of blocked DNA replication forks via replication fork reversal (RFR). RuvA specifically binds to HJ cruciform DNA, conferring on it an open structure. The RuvB hexamer acts as an ATP-dependent pump, pulling dsDNA into and through the RuvAB complex. RuvB forms 2 homohexamers on either side of HJ DNA bound by 1 or 2 RuvA tetramers; 4 subunits per hexamer contact DNA at a time. Coordinated motions by a converter formed by DNA-disengaged RuvB subunits stimulates ATP hydrolysis and nucleotide exchange. Immobilization of the converter enables RuvB to convert the ATP-contained energy into a lever motion, pulling 2 nucleotides of DNA out of the RuvA tetramer per ATP hydrolyzed, thus driving DNA branch migration. The RuvB motors rotate together with the DNA substrate, which together with the progressing nucleotide cycle form the mechanistic basis for DNA recombination by continuous HJ branch migration. Branch migration allows RuvC to scan DNA until it finds its consensus sequence, where it cleaves and resolves cruciform DNA. The protein is Holliday junction branch migration complex subunit RuvB of Nostoc punctiforme (strain ATCC 29133 / PCC 73102).